A 456-amino-acid chain; its full sequence is RuvB-like 1 (456 aa).

70–77 contacts ATP; the sequence is GPPGTGKT.

This sequence belongs to the RuvB family. As to quaternary structure, forms homohexameric rings. Can form a dodecamer with ruvbl2 made of two stacked hexameric rings. Is a component of the RNA polymerase II holoenzyme complex. Component of the chromatin-remodeling Ino80 complex. Component of some MLL1/MLL complex.

The protein localises to the nucleus. It localises to the dynein axonemal particle. It carries out the reaction ATP + H2O = ADP + phosphate + H(+). Has single-stranded DNA-stimulated ATPase and ATP-dependent DNA helicase (3' to 5') activity suggesting a role in nuclear processes such as recombination and transcription. Proposed core component of the chromatin remodeling INO80 complex which exhibits DNA- and nucleosome-activated ATPase activity and catalyzes ATP-dependent nucleosome sliding. In Xenopus laevis (African clawed frog), this protein is RuvB-like 1 (ruvbl1).